The sequence spans 264 residues: MQIHSLKYPLIELKGVNVTFAQKTILSDINLTIYPNSIMTIVGPNGGGKSTLLKVLLKLLPATSGKVIYSKNVVIGYVPQNIYLDKSLPITVEKFLSLRKGTHKQDIKDALTLLSIGHLRLNAMQKLSGGEMQRVLLARAILNKPNLLVLDEPTQGVDITGQAELYQLIKQTQQQLNCAILMVSHDLHLVMADTNEVLCVNQHICCAGSPEAVSNDPVFIRFFGNQFAKNIAFYTHHHNHKHNIHGDICCGQDFRSTQCKHKIN.

Residues isoleucine 11–glutamine 226 enclose the ABC transporter domain. Glycine 43–serine 50 contacts ATP.

It belongs to the ABC transporter superfamily. Zinc importer (TC 3.A.1.15.5) family. The complex is composed of two ATP-binding proteins (ZnuC), two transmembrane proteins (ZnuB) and a solute-binding protein (ZnuA).

It is found in the cell inner membrane. It catalyses the reaction Zn(2+)(out) + ATP(in) + H2O(in) = Zn(2+)(in) + ADP(in) + phosphate(in) + H(+)(in). In terms of biological role, part of the ABC transporter complex ZnuABC involved in zinc import. Responsible for energy coupling to the transport system. The protein is Zinc import ATP-binding protein ZnuC of Histophilus somni (strain 129Pt) (Haemophilus somnus).